Here is a 298-residue protein sequence, read N- to C-terminus: Ribosomal protein L11 methyltransferase (298 aa).

Residues threonine 150, glycine 171, aspartate 193, and asparagine 232 each coordinate S-adenosyl-L-methionine.

The protein belongs to the methyltransferase superfamily. PrmA family.

It localises to the cytoplasm. The enzyme catalyses L-lysyl-[protein] + 3 S-adenosyl-L-methionine = N(6),N(6),N(6)-trimethyl-L-lysyl-[protein] + 3 S-adenosyl-L-homocysteine + 3 H(+). Functionally, methylates ribosomal protein L11. The polypeptide is Ribosomal protein L11 methyltransferase (Chromobacterium violaceum (strain ATCC 12472 / DSM 30191 / JCM 1249 / CCUG 213 / NBRC 12614 / NCIMB 9131 / NCTC 9757 / MK)).